A 467-amino-acid polypeptide reads, in one-letter code: MSLSLWQQCLARLQDELPATEFSMWIRPLQAELSDNTLALYAPNRFVLDWVRDKYLNNINGLLTSFCGADAPQLRFEVGTKPVTQTPQAAVTSNVAAPALVAQTQPQRAAPSTRSGWDNVPAPAEPTYRSNVNVKHTFDNFVEGKSNQLARAAARQVADNPGGAYNPLFLYGGTGLGKTHLLHAVGNGIMARKPNAKVVYMHSERFVQDMVKALQNNAIEEFKRYYRSVDALLIDDIQFFANKERSQEEFFHTFNALLEGNQQIILTSDRYPKEINGVEDRLKSRFGWGLTVAIEPPELETRVAILMKKADENDIRLPGEVAFFIAKRLRSNVRELEGALNRVIANANFTGRAITIDFVREALRDLLALQEKLVTIDNIQKTVAEYYKIKVADLLSKRRSRSVARPRQMAMALAKELTNHSLPEIGDAFGGRDHTTVLHACRKIEQLREESHDIKEDFSNLIRTLSS.

The domain I, interacts with DnaA modulators stretch occupies residues 1–90; sequence MSLSLWQQCL…KPVTQTPQAA (90 aa). Residues 91–130 are domain II; sequence VTSNVAAPALVAQTQPQRAAPSTRSGWDNVPAPAEPTYRS. Residues 131-347 are domain III, AAA+ region; that stretch reads NVNVKHTFDN…GALNRVIANA (217 aa). ATP contacts are provided by glycine 175, glycine 177, lysine 178, and threonine 179. Residues 348–467 form a domain IV, binds dsDNA region; that stretch reads NFTGRAITID…FSNLIRTLSS (120 aa).

It belongs to the DnaA family. Oligomerizes as a right-handed, spiral filament on DNA at oriC.

The protein localises to the cytoplasm. In terms of biological role, plays an essential role in the initiation and regulation of chromosomal replication. ATP-DnaA binds to the origin of replication (oriC) to initiate formation of the DNA replication initiation complex once per cell cycle. Binds the DnaA box (a 9 base pair repeat at the origin) and separates the double-stranded (ds)DNA. Forms a right-handed helical filament on oriC DNA; dsDNA binds to the exterior of the filament while single-stranded (ss)DNA is stabiized in the filament's interior. The ATP-DnaA-oriC complex binds and stabilizes one strand of the AT-rich DNA unwinding element (DUE), permitting loading of DNA polymerase. After initiation quickly degrades to an ADP-DnaA complex that is not apt for DNA replication. Binds acidic phospholipids. This Shigella dysenteriae serotype 1 (strain Sd197) protein is Chromosomal replication initiator protein DnaA.